Reading from the N-terminus, the 357-residue chain is Beta-hexosaminidase (357 aa).

Residues Asp72, Arg80, Arg146, and 176–177 (KH) contribute to the substrate site. The Proton donor/acceptor role is filled by His189. The active-site Nucleophile is the Asp260.

This sequence belongs to the glycosyl hydrolase 3 family. NagZ subfamily.

It is found in the cytoplasm. It catalyses the reaction Hydrolysis of terminal non-reducing N-acetyl-D-hexosamine residues in N-acetyl-beta-D-hexosaminides.. It functions in the pathway cell wall biogenesis; peptidoglycan recycling. Plays a role in peptidoglycan recycling by cleaving the terminal beta-1,4-linked N-acetylglucosamine (GlcNAc) from peptide-linked peptidoglycan fragments, giving rise to free GlcNAc, anhydro-N-acetylmuramic acid and anhydro-N-acetylmuramic acid-linked peptides. This is Beta-hexosaminidase from Hydrogenovibrio crunogenus (strain DSM 25203 / XCL-2) (Thiomicrospira crunogena).